Here is a 316-residue protein sequence, read N- to C-terminus: Protoheme IX farnesyltransferase 2 (316 aa).

Over residues 1–15 (MEQNLNSEQKPQSSA) the composition is skewed to polar residues. The interval 1-24 (MEQNLNSEQKPQSSAKPRGKSSRS) is disordered. A run of 7 helical transmembrane segments spans residues 62 to 82 (IPEMIFSTVGSALVIGAAGAF), 117 to 137 (IVMLIIGLAVLALASPLAAAF), 163 to 183 (IGSISGAVPPLIGWSAVSTDI), 188 to 208 (IARFIFVMVIWQMPHFYAIAI), 231 to 251 (TYYQTNFYLILLILSSFLFGS), 252 to 272 (LSVGIMLVALLLSIAWLVMSI), and 293 to 313 (LFHMTILFTTVIVYSLVGVIF).

Belongs to the UbiA prenyltransferase family. Protoheme IX farnesyltransferase subfamily. In terms of assembly, interacts with CtaA.

Its subcellular location is the cell membrane. It carries out the reaction heme b + (2E,6E)-farnesyl diphosphate + H2O = Fe(II)-heme o + diphosphate. Its pathway is porphyrin-containing compound metabolism; heme O biosynthesis; heme O from protoheme: step 1/1. Functionally, converts heme B (protoheme IX) to heme O by substitution of the vinyl group on carbon 2 of heme B porphyrin ring with a hydroxyethyl farnesyl side group. This chain is Protoheme IX farnesyltransferase 2, found in Lysinibacillus sphaericus (strain C3-41).